Here is a 332-residue protein sequence, read N- to C-terminus: Protein FAM131B (332 aa).

The tract at residues 1 to 22 (MDSTSSLHGSSLHRPSTEQTRT) is disordered. Phosphoserine occurs at positions 47, 114, and 117. A disordered region spans residues 221 to 332 (LGPAFDDSQP…FDEEEGDANN (112 aa)). Basic and acidic residues-rich tracts occupy residues 272–281 (PVEEEKRPLA) and 288–302 (AGCR…REDP). 3 positions are modified to phosphoserine: S295, S297, and S313. Residue T316 is modified to Phosphothreonine. Residues S317, S318, and S322 each carry the phosphoserine modification. Over residues 323-332 (FDEEEGDANN) the composition is skewed to acidic residues.

The protein belongs to the FAM131 family.

The sequence is that of Protein FAM131B (Fam131b) from Rattus norvegicus (Rat).